The chain runs to 251 residues: 3-deoxy-manno-octulosonate cytidylyltransferase (251 aa).

Belongs to the KdsB family.

It localises to the cytoplasm. The catalysed reaction is 3-deoxy-alpha-D-manno-oct-2-ulosonate + CTP = CMP-3-deoxy-beta-D-manno-octulosonate + diphosphate. The protein operates within nucleotide-sugar biosynthesis; CMP-3-deoxy-D-manno-octulosonate biosynthesis; CMP-3-deoxy-D-manno-octulosonate from 3-deoxy-D-manno-octulosonate and CTP: step 1/1. Its pathway is bacterial outer membrane biogenesis; lipopolysaccharide biosynthesis. Functionally, activates KDO (a required 8-carbon sugar) for incorporation into bacterial lipopolysaccharide in Gram-negative bacteria. The polypeptide is 3-deoxy-manno-octulosonate cytidylyltransferase (Rhizobium etli (strain ATCC 51251 / DSM 11541 / JCM 21823 / NBRC 15573 / CFN 42)).